The following is a 340-amino-acid chain: Methionine import ATP-binding protein MetN (340 aa).

Residues 8–246 enclose the ABC transporter domain; it reads ISVKNLNKEI…PYSSITEELF (239 aa). 40–47 is an ATP binding site; sequence GHSGSGKS.

This sequence belongs to the ABC transporter superfamily. Methionine importer (TC 3.A.1.24) family. The complex is composed of two ATP-binding proteins (MetN), two transmembrane proteins (MetI) and a solute-binding protein (MetQ).

It is found in the cell inner membrane. It catalyses the reaction L-methionine(out) + ATP + H2O = L-methionine(in) + ADP + phosphate + H(+). The enzyme catalyses D-methionine(out) + ATP + H2O = D-methionine(in) + ADP + phosphate + H(+). Part of the ABC transporter complex MetNIQ involved in methionine import. Responsible for energy coupling to the transport system. In Chlamydia felis (strain Fe/C-56) (Chlamydophila felis), this protein is Methionine import ATP-binding protein MetN.